We begin with the raw amino-acid sequence, 261 residues long: Caveolae-associated protein 3 (261 aa).

The interaction with CAVIN1 stretch occupies residues 1-84; sequence MRESALERGP…SNTLAQLLAK (84 aa). The tract at residues 20–78 is leucine-zipper; it reads VHAVTVVTLLEKLASMLETLRERQGGLARRQGGLAGSVRRIQSGLGALSRSHDTTSNTL. Serine 62 and serine 70 each carry phosphoserine. Residue lysine 128 forms a Glycyl lysine isopeptide (Lys-Gly) (interchain with G-Cter in SUMO2) linkage. The interaction with CAV1 stretch occupies residues 135–203; it reads ASAFQKAPEP…SGRKGPAAPP (69 aa). The interval 139-261 is disordered; sequence QKAPEPLGPA…EALLQMESVA (123 aa). Over residues 158-170 the composition is skewed to acidic residues; the sequence is LEAEVGESSDEEP. Phosphoserine occurs at positions 165, 166, and 173. Residues 200–212 show a composition bias toward pro residues; it reads AAPPPTPVKPPRL. Residues 213 to 231 are compositionally biased toward low complexity; sequence GPGRSAEAQPEAQPALEPT.

This sequence belongs to the CAVIN family. Component of the CAVIN complex composed of CAVIN1, CAVIN2, CAVIN3 and CAVIN4. Interacts with PRKCD and with phosphatidylserine. Phosphatidylserine may form a bridge between PKC and PKC-binding partners and stabilize the binding. Interacts with PER2. Interacts with CAVIN1. Interacts (via leucine-zipper domain) with CAV1 in a cholesterol-sensitive manner. Interacts with EPS15L1. In terms of processing, in vitro, phosphorylated by PRKCD. Skeletal muscle, liver, stomach, lung, kidney and heart (at protein level). Strongly expressed in mammary and epithelial cells.

The protein resides in the cytoplasm. It is found in the membrane. Its subcellular location is the caveola. The protein localises to the cytosol. Functionally, regulates the traffic and/or budding of caveolae. Plays a role in caveola formation in a tissue-specific manner. Required for the formation of caveolae in smooth muscle but not in the lung and heart endothelial cells. Regulates the equilibrium between cell surface-associated and cell surface-dissociated caveolae by promoting the rapid release of caveolae from the cell surface. Plays a role in the regulation of the circadian clock. Modulates the period length and phase of circadian gene expression and also regulates expression and interaction of the core clock components PER1/2 and CRY1/2. The sequence is that of Caveolae-associated protein 3 from Homo sapiens (Human).